The following is a 550-amino-acid chain: Probable asparagine synthetase [glutamine-hydrolyzing] (550 aa).

Catalysis depends on cysteine 2, which acts as the For GATase activity. The 188-residue stretch at 2–189 folds into the Glutamine amidotransferase type-2 domain; the sequence is CGIICFIQYG…PNQYVTIDLS (188 aa). Residues 53–57, 78–80, and aspartate 100 each bind L-glutamine; these read RLAIM and NGE. Residues 213-530 enclose the Asparagine synthetase domain; sequence YYQSHKSLID…GGRDHIIPHY (318 aa). ATP contacts are provided by residues leucine 256, valine 284, and 360 to 361; that span reads SG.

It catalyses the reaction L-aspartate + L-glutamine + ATP + H2O = L-asparagine + L-glutamate + AMP + diphosphate + H(+). It participates in amino-acid biosynthesis; L-asparagine biosynthesis; L-asparagine from L-aspartate (L-Gln route): step 1/1. In Acanthamoeba polyphaga mimivirus (APMV), this protein is Probable asparagine synthetase [glutamine-hydrolyzing].